A 212-amino-acid chain; its full sequence is Large ribosomal subunit protein uL3 (212 aa).

The interval 127-153 is disordered; the sequence is FRGGPATHGQSDRHRAPGSIGSGTTPG.

The protein belongs to the universal ribosomal protein uL3 family. Part of the 50S ribosomal subunit. Forms a cluster with proteins L14 and L19.

Its function is as follows. One of the primary rRNA binding proteins, it binds directly near the 3'-end of the 23S rRNA, where it nucleates assembly of the 50S subunit. In Herpetosiphon aurantiacus (strain ATCC 23779 / DSM 785 / 114-95), this protein is Large ribosomal subunit protein uL3.